The primary structure comprises 389 residues: tRNA pseudouridine synthase Pus10 (389 aa).

Aspartate 213 serves as the catalytic Nucleophile. Substrate-binding residues include tyrosine 278 and tyrosine 350.

It belongs to the pseudouridine synthase Pus10 family.

The catalysed reaction is uridine(54) in tRNA = pseudouridine(54) in tRNA. It carries out the reaction uridine(55) in tRNA = pseudouridine(55) in tRNA. In terms of biological role, responsible for synthesis of pseudouridine from uracil-54 and uracil-55 in the psi GC loop of transfer RNAs. This Thermoplasma acidophilum (strain ATCC 25905 / DSM 1728 / JCM 9062 / NBRC 15155 / AMRC-C165) protein is tRNA pseudouridine synthase Pus10.